We begin with the raw amino-acid sequence, 421 residues long: E3 ubiquitin-protein ligase MARCHF4 (421 aa).

The first 16 residues, 1–16, serve as a signal peptide directing secretion; the sequence is MLLAIGVIVWCWGLLS. The interval 60 to 79 is disordered; it reads ELNAEGNATSSATESHSLAN. Over residues 65–77 the composition is skewed to polar residues; sequence GNATSSATESHSL. The RING-CH-type zinc-finger motif lies at 135 to 195; the sequence is DSGVRTPLCR…ELCYYKYQVI (61 aa). 8 residues coordinate Zn(2+): Cys143, Cys146, Cys159, Cys161, His169, Cys172, Cys185, and Cys188. 2 helical membrane passes run 218–238 and 252–272; these read IAAA…LVWS and LFQI…ALIV. 2 disordered regions span residues 319 to 385 and 401 to 421; these read PLTH…LPDH and QEPR…VTTV. Composition is skewed to polar residues over residues 367 to 380 and 403 to 412; these read TEPQ…NGQP and PRGQTSNSNR.

It localises to the golgi apparatus membrane. The enzyme catalyses S-ubiquitinyl-[E2 ubiquitin-conjugating enzyme]-L-cysteine + [acceptor protein]-L-lysine = [E2 ubiquitin-conjugating enzyme]-L-cysteine + N(6)-ubiquitinyl-[acceptor protein]-L-lysine.. It participates in protein modification; protein ubiquitination. In terms of biological role, E3 ubiquitin-protein ligase. E3 ubiquitin ligases accept ubiquitin from an E2 ubiquitin-conjugating enzyme in the form of a thioester and then directly transfer the ubiquitin to targeted substrates. The chain is E3 ubiquitin-protein ligase MARCHF4 (marchf4) from Danio rerio (Zebrafish).